The sequence spans 307 residues: 4-hydroxythreonine-4-phosphate dehydrogenase (307 aa).

H126 and T127 together coordinate substrate. A divalent metal cation is bound by residues H156, H195, and H251. K259, N268, and R277 together coordinate substrate.

Belongs to the PdxA family. In terms of assembly, homodimer. It depends on Zn(2+) as a cofactor. Requires Mg(2+) as cofactor. Co(2+) is required as a cofactor.

It is found in the cytoplasm. The catalysed reaction is 4-(phosphooxy)-L-threonine + NAD(+) = 3-amino-2-oxopropyl phosphate + CO2 + NADH. The protein operates within cofactor biosynthesis; pyridoxine 5'-phosphate biosynthesis; pyridoxine 5'-phosphate from D-erythrose 4-phosphate: step 4/5. Catalyzes the NAD(P)-dependent oxidation of 4-(phosphooxy)-L-threonine (HTP) into 2-amino-3-oxo-4-(phosphooxy)butyric acid which spontaneously decarboxylates to form 3-amino-2-oxopropyl phosphate (AHAP). This is 4-hydroxythreonine-4-phosphate dehydrogenase from Helicobacter pylori (strain ATCC 700392 / 26695) (Campylobacter pylori).